A 424-amino-acid polypeptide reads, in one-letter code: Serine--tRNA ligase (424 aa).

230-232 (TAE) provides a ligand contact to L-serine. ATP is bound at residue 261-263 (RSE). An L-serine-binding site is contributed by E284. Residue 348–351 (EISS) participates in ATP binding. S384 is an L-serine binding site.

The protein belongs to the class-II aminoacyl-tRNA synthetase family. Type-1 seryl-tRNA synthetase subfamily. Homodimer. The tRNA molecule binds across the dimer.

The protein localises to the cytoplasm. It carries out the reaction tRNA(Ser) + L-serine + ATP = L-seryl-tRNA(Ser) + AMP + diphosphate + H(+). The catalysed reaction is tRNA(Sec) + L-serine + ATP = L-seryl-tRNA(Sec) + AMP + diphosphate + H(+). Its pathway is aminoacyl-tRNA biosynthesis; selenocysteinyl-tRNA(Sec) biosynthesis; L-seryl-tRNA(Sec) from L-serine and tRNA(Sec): step 1/1. Catalyzes the attachment of serine to tRNA(Ser). Is also able to aminoacylate tRNA(Sec) with serine, to form the misacylated tRNA L-seryl-tRNA(Sec), which will be further converted into selenocysteinyl-tRNA(Sec). This chain is Serine--tRNA ligase, found in Desulfatibacillum aliphaticivorans.